The following is a 306-amino-acid chain: Ornithine carbamoyltransferase (306 aa).

Residues serine 51–threonine 54, glutamine 78, arginine 102, and histidine 129–glutamine 132 each bind carbamoyl phosphate. L-ornithine is bound by residues asparagine 160, aspartate 223, and serine 227–methionine 228. Residues cysteine 263 to leucine 264 and arginine 291 contribute to the carbamoyl phosphate site.

It belongs to the aspartate/ornithine carbamoyltransferase superfamily. OTCase family.

The protein resides in the cytoplasm. It carries out the reaction carbamoyl phosphate + L-ornithine = L-citrulline + phosphate + H(+). It participates in amino-acid biosynthesis; L-arginine biosynthesis; L-arginine from L-ornithine and carbamoyl phosphate: step 1/3. Functionally, reversibly catalyzes the transfer of the carbamoyl group from carbamoyl phosphate (CP) to the N(epsilon) atom of ornithine (ORN) to produce L-citrulline. This Nostoc punctiforme (strain ATCC 29133 / PCC 73102) protein is Ornithine carbamoyltransferase (argF).